Reading from the N-terminus, the 132-residue chain is CLAVATA3/ESR (CLE)-related protein ESR2 (132 aa).

The first 26 residues, 1-26 (MASRMGMVAIVSLFVCALVASTSVNA), serve as a signal peptide directing secretion. Positions 68–132 (NRASKQLDSE…IGPPPFLDRY (65 aa)) are disordered. Proline 82 and proline 85 each carry hydroxyproline. Proline 85 is a glycosylation site (O-linked (Ara...) hydroxyproline). The segment covering 123–132 (IGPPPFLDRY) has biased composition (pro residues).

This sequence belongs to the CLV3/ESR signal peptide family. The O-glycosylation (arabinosylation) of the hydroxyproline Pro-85 enhances binding affinity of the ESR2p peptide for its receptor. In terms of tissue distribution, seed endosperm.

It is found in the secreted. The protein localises to the extracellular space. Its function is as follows. Extracellular signal peptide that regulates cell fate. This chain is CLAVATA3/ESR (CLE)-related protein ESR2, found in Zea mays (Maize).